Reading from the N-terminus, the 298-residue chain is Inosose dehydratase 1 (298 aa).

This sequence belongs to the IolE/MocC family. It depends on glutathione as a cofactor. The cofactor is Co(2+). Requires Mn(2+) as cofactor.

It carries out the reaction scyllo-inosose = 3D-3,5/4-trihydroxycyclohexane-1,2-dione + H2O. It functions in the pathway polyol metabolism; myo-inositol degradation into acetyl-CoA; acetyl-CoA from myo-inositol: step 2/7. Its function is as follows. Catalyzes the dehydration of inosose (2-keto-myo-inositol, 2KMI or 2,4,6/3,5-pentahydroxycyclohexanone) to 3D-(3,5/4)-trihydroxycyclohexane-1,2-dione (D-2,3-diketo-4-deoxy-epi-inositol). The chain is Inosose dehydratase 1 from Bacillus cereus (strain ZK / E33L).